An 865-amino-acid chain; its full sequence is Cadherin-related family member 1 (865 aa).

An N-terminal signal peptide occupies residues 1–23 (MKHVRHFIPSLFLSLVHVCLVQA). Residues 24–705 (NYAPYFFDNG…TKDNPMKALG (682 aa)) are Extracellular-facing. Cadherin domains lie at 38-137 (NGNM…SPEF), 138-249 (INTP…PPMF), 250-356 (IGTP…PPTF), 362-475 (PQNR…VPKF), 476-579 (SSDY…SPEF), and 571-690 (DVND…GPMA). A helical transmembrane segment spans residues 706–726 (VLAGVMGIMVLITIMISTAMF). Residues 727-865 (WRNKRSNKIM…RNASMGEPHI (139 aa)) lie on the Cytoplasmic side of the membrane. The tract at residues 782 to 810 (ENSNNNVQAAPVPPAAPLPPPPPALAASG) is disordered. Residues 792-805 (PVPPAAPLPPPPPA) are compositionally biased toward pro residues.

The protein resides in the membrane. Functionally, potential calcium-dependent cell-adhesion protein. This is Cadherin-related family member 1 (CDHR1) from Gallus gallus (Chicken).